Reading from the N-terminus, the 256-residue chain is 5-keto-4-deoxy-D-glucarate aldolase (256 aa).

Histidine 50 (proton acceptor) is an active-site residue. Position 151 (glutamine 151) interacts with substrate. Residue glutamate 153 participates in Mg(2+) binding. The substrate site is built by serine 178 and aspartate 179. Aspartate 179 provides a ligand contact to Mg(2+).

Belongs to the HpcH/HpaI aldolase family. KDGluc aldolase subfamily. In terms of assembly, homohexamer; trimer of dimers. Mg(2+) is required as a cofactor.

It carries out the reaction 5-dehydro-4-deoxy-D-glucarate = 2-hydroxy-3-oxopropanoate + pyruvate. The catalysed reaction is 2-dehydro-3-deoxy-D-glucarate = 2-hydroxy-3-oxopropanoate + pyruvate. It functions in the pathway carbohydrate acid metabolism; galactarate degradation; D-glycerate from galactarate: step 2/3. Its function is as follows. Catalyzes the reversible retro-aldol cleavage of both 5-keto-4-deoxy-D-glucarate and 2-keto-3-deoxy-D-glucarate to pyruvate and tartronic semialdehyde. This chain is 5-keto-4-deoxy-D-glucarate aldolase, found in Shigella dysenteriae serotype 1 (strain Sd197).